The following is a 195-amino-acid chain: GTP-dependent dephospho-CoA kinase (195 aa).

GTP contacts are provided by Asp49, Val50, Asp68, Glu127, and Asp150.

The protein belongs to the GTP-dependent DPCK family.

It catalyses the reaction 3'-dephospho-CoA + GTP = GDP + CoA + H(+). It participates in cofactor biosynthesis; coenzyme A biosynthesis. Functionally, catalyzes the GTP-dependent phosphorylation of the 3'-hydroxyl group of dephosphocoenzyme A to form coenzyme A (CoA). The polypeptide is GTP-dependent dephospho-CoA kinase (Methanosarcina barkeri (strain Fusaro / DSM 804)).